The primary structure comprises 267 residues: Urease accessory protein UreD 2 (267 aa).

The protein belongs to the UreD family. In terms of assembly, ureD, UreF and UreG form a complex that acts as a GTP-hydrolysis-dependent molecular chaperone, activating the urease apoprotein by helping to assemble the nickel containing metallocenter of UreC. The UreE protein probably delivers the nickel.

The protein localises to the cytoplasm. Its function is as follows. Required for maturation of urease via the functional incorporation of the urease nickel metallocenter. This is Urease accessory protein UreD 2 from Synechococcus sp. (strain JA-3-3Ab) (Cyanobacteria bacterium Yellowstone A-Prime).